The following is an 84-amino-acid chain: Large ribosomal subunit protein uL23 (84 aa).

The protein belongs to the universal ribosomal protein uL23 family. In terms of assembly, part of the 50S ribosomal subunit. Contacts protein L29.

Binds to 23S rRNA. One of the proteins that surrounds the polypeptide exit tunnel on the outside of the ribosome. The chain is Large ribosomal subunit protein uL23 from Thermoplasma acidophilum (strain ATCC 25905 / DSM 1728 / JCM 9062 / NBRC 15155 / AMRC-C165).